Reading from the N-terminus, the 162-residue chain is Peptidyl-prolyl cis-trans isomerase (162 aa).

The PPIase cyclophilin-type domain maps to 16–162 (KTAYATIKTN…IESVVFSPSL (147 aa)).

It belongs to the cyclophilin-type PPIase family.

It catalyses the reaction [protein]-peptidylproline (omega=180) = [protein]-peptidylproline (omega=0). In terms of biological role, PPIases accelerate the folding of proteins. It catalyzes the cis-trans isomerization of proline imidic peptide bonds in oligopeptides. The protein is Peptidyl-prolyl cis-trans isomerase (ppiA) of Helicobacter pylori (strain J99 / ATCC 700824) (Campylobacter pylori J99).